Reading from the N-terminus, the 770-residue chain is MDEEKLPCELHKEGSATQEDHGLEPEEEPGLQNGTAASEGLSSHISGPGGEKTLEGTMEPVRGPDVALPGLNLSLTNGLALGQDGNILEDSIEFKTWRSGPAEEEDVPGSPCPDAGDPQLGLDCPGEPDVRDGFSATFEKILESELLRGTQYSSLDSLDVLSLTDESDSCVSFEAPLTPLIQQRARDSPEAGAGLGNGDMGPEGDLGATGGCDGELGSPLRRSISSSRSENVLSHLSLTSVPNGFHEDGPGGSGGDDEDDEDTDKLLNSASDTSLKDGLSDSDSELSSSEGLEPGSTDPLANGCQGVSEAARRLARRLYHLEGFQRCDVARQLGKNNEFSRLVAGEYLSFFDFSGLTLDRALRTFLKAFPLMGETQERERVLTHFSRRYCQCNPDDSTSEDGIHTLTCALMLLNTDLHGHNIGKKMSCQQFIANLDQLNDGQDFAKDLLKTLYNSIKNEKLEWAIDEDELRKSLSELVDDKFGTGTKKVTRILDGGNPFLDVPQALNATTYKHGVLTRKTHADMDGKRTPRGRRGWKKFYAVLKGTILYLQKDEYRLDKALSEGDLKNAIRVHHALATRASDYSKKSNVLKLKTADWRVFLFQAPSKEEMLSWILRINLVAAIFSAPAFPAAVSSMKKFCRPLLPSCTTRLCQEEQLRSHENKLRQVTAELAEHRCHPLERGLKSKEAEEYRLKEHYLTFEKSRYETYIHLLAVKIKVGSDDLERIEARLATIEGDDPALRKTHSSPALSLGHGPVTGSKATKDTSASDT.

The span at 1 to 24 (MDEEKLPCELHKEGSATQEDHGLE) shows a compositional bias: basic and acidic residues. Disordered stretches follow at residues 1 to 65 (MDEE…RGPD) and 181 to 304 (IQQR…ANGC). Positions 32 to 45 (QNGTAASEGLSSHI) are enriched in polar residues. Serine 188 carries the phosphoserine modification. Low complexity-rich tracts occupy residues 216 to 234 (LGSP…NVLS) and 285 to 296 (ELSSSEGLEPGS). One can recognise an SEC7 domain in the interval 256–459 (DDEDDEDTDK…KTLYNSIKNE (204 aa)). Residues 509 to 622 (TTYKHGVLTR…WILRINLVAA (114 aa)) form the PH domain. A helical membrane pass occupies residues 619 to 636 (LVAAIFSAPAFPAAVSSM). Residues 650-677 (RLCQEEQLRSHENKLRQVTAELAEHRCH) adopt a coiled-coil conformation. The segment at 738-770 (PALRKTHSSPALSLGHGPVTGSKATKDTSASDT) is disordered.

Belongs to the PSD family.

It localises to the cell membrane. It is found in the cell projection. The protein localises to the ruffle membrane. Its subcellular location is the cleavage furrow. The sequence is that of PH and SEC7 domain-containing protein 2 (Psd2) from Mus musculus (Mouse).